The chain runs to 221 residues: Urease accessory protein UreF (221 aa).

Belongs to the UreF family. As to quaternary structure, ureD, UreF and UreG form a complex that acts as a GTP-hydrolysis-dependent molecular chaperone, activating the urease apoprotein by helping to assemble the nickel containing metallocenter of UreC. The UreE protein probably delivers the nickel.

Its subcellular location is the cytoplasm. Functionally, required for maturation of urease via the functional incorporation of the urease nickel metallocenter. The chain is Urease accessory protein UreF from Aliivibrio fischeri (strain ATCC 700601 / ES114) (Vibrio fischeri).